The chain runs to 297 residues: Putative lipid kinase MamU (297 aa).

The DAGKc domain occupies 43-131 (EGKDMGRMVR…MDVGRVNDRY (89 aa)). Position 68-74 (68-74 (GDGSLSR)) interacts with ATP. Glutamate 274 serves as the catalytic Proton acceptor.

Belongs to the diacylglycerol/lipid kinase family.

It is found in the cytoplasm. Its function is as follows. Might phosphorylate lipids. The chain is Putative lipid kinase MamU from Magnetospirillum gryphiswaldense (strain DSM 6361 / JCM 21280 / NBRC 15271 / MSR-1).